Here is a 121-residue protein sequence, read N- to C-terminus: Putative iron-sulfur cluster insertion protein ErpA (121 aa).

Residues Cys-49, Cys-113, and Cys-115 each coordinate iron-sulfur cluster.

Belongs to the HesB/IscA family. Homodimer. Iron-sulfur cluster serves as cofactor.

Functionally, required for insertion of 4Fe-4S clusters. This Nitrosomonas europaea (strain ATCC 19718 / CIP 103999 / KCTC 2705 / NBRC 14298) protein is Putative iron-sulfur cluster insertion protein ErpA.